Reading from the N-terminus, the 946-residue chain is DNA primase (946 aa).

Residues 596–626 (RDTEEDEDGKENKNNVPDNGVFQKTTSSVDT) are disordered. Residues 617–626 (FQKTTSSVDT) show a composition bias toward polar residues. The CHC2-type zinc finger occupies 881 to 920 (CLNYTHRNPQETVQVFIDLRTEHSYALWASLWSRCFTKKC).

The protein belongs to the herpesviridae DNA primase family. Associates with the helicase and the primase-associated factor to form the helicase-primase factor. Interacts with host SNAPIN.

The protein localises to the host nucleus. Essential component of the helicase/primase complex. Unwinds the DNA at the replication forks and generates single-stranded DNA for both leading and lagging strand synthesis. The primase initiates primer synthesis and thereby produces large amount of short RNA primers on the lagging strand that the polymerase elongates using dNTPs. The protein is DNA primase (UL70) of Homo sapiens (Human).